The sequence spans 442 residues: tRNA(Ile)-lysidine synthase (442 aa).

28 to 33 contacts ATP; it reads SGGLDS.

This sequence belongs to the tRNA(Ile)-lysidine synthase family.

Its subcellular location is the cytoplasm. It carries out the reaction cytidine(34) in tRNA(Ile2) + L-lysine + ATP = lysidine(34) in tRNA(Ile2) + AMP + diphosphate + H(+). Functionally, ligates lysine onto the cytidine present at position 34 of the AUA codon-specific tRNA(Ile) that contains the anticodon CAU, in an ATP-dependent manner. Cytidine is converted to lysidine, thus changing the amino acid specificity of the tRNA from methionine to isoleucine. The polypeptide is tRNA(Ile)-lysidine synthase (Pseudomonas aeruginosa (strain ATCC 15692 / DSM 22644 / CIP 104116 / JCM 14847 / LMG 12228 / 1C / PRS 101 / PAO1)).